Here is a 476-residue protein sequence, read N- to C-terminus: MATIDNAMIHSLIQHLGGKSNIQSVTNCMTRLRVTLHDSSVVDKDELKKIQGVLGVVEADEQLQLILGPGKATKAAEMMKASLGDNMSSPSLQEIARTQKQQIKSAQTSSIHQFFAKFATIFTPLIPGFIGAGLLLGLATVLQQAFVAGVENPNAFLVDLIAYMKVFSKGLFSFLSILIGYNAAKAFGGSGVNGAILASLFILGYNPEATKGIYSGLSNFFGLTIDPRGNIIGVLIAAIVGAKVERWVRKFIPDSLDMALTSTVTLLIMGCFTFLFIMPIGVYLFNGMSWLFSNLNGNPLGTAVLAGLFLISVMLGIHQGFVPVYFALVETQGFNALFPVLAMAGAGQVGAALALYFKANKGAVLRDQIKGAIIPGFLGIGEPLIYGVTLPRVKPFITACIGGAAGGFTIGLIAYLGFPMGLNTVFGPSGLLAIPLMTSPNGVLPAIATYLLGTVVAYATGFITTYFFATKDVDLS.

One can recognise a PTS EIIB type-1 domain in the interval 1–89 (MATIDNAMIH…KASLGDNMSS (89 aa)). The active-site Phosphocysteine intermediate; for EIIB activity is the Cys-28. The 361-residue stretch at 116 to 476 (AKFATIFTPL…FFATKDVDLS (361 aa)) folds into the PTS EIIC type-1 domain. Helical transmembrane passes span 118 to 138 (FATI…LLGL), 160 to 180 (LIAY…ILIG), 186 to 206 (AFGG…LGYN), 220 to 240 (FFGL…AAIV), 265 to 285 (TLLI…VYLF), 304 to 324 (VLAG…FVPV), 337 to 357 (LFPV…ALYF), 371 to 391 (GAII…VTLP), 396 to 416 (FITA…IAYL), and 443 to 463 (VLPA…TGFI).

Its subcellular location is the cell inner membrane. It carries out the reaction N-acetyl-beta-D-muramate(out) + N(pros)-phospho-L-histidyl-[protein] = N-acetyl-beta-D-muramate 6-phosphate(in) + L-histidyl-[protein]. In terms of biological role, the phosphoenolpyruvate-dependent sugar phosphotransferase system (sugar PTS), a major carbohydrate active transport system, catalyzes the phosphorylation of incoming sugar substrates concomitantly with their translocation across the cell membrane. This system is involved in N-acetylmuramic acid (MurNAc) transport, yielding cytoplasmic MurNAc-6-P. Is also able to take up anhydro-N-acetylmuramic acid (anhMurNAc), but cannot phosphorylate the carbon 6, probably because of the 1,6-anhydro ring. The polypeptide is PTS system N-acetylmuramic acid-specific EIIBC component (murP) (Pasteurella multocida (strain Pm70)).